Reading from the N-terminus, the 63-residue chain is Rubredoxin-2 (63 aa).

In terms of domain architecture, Rubredoxin-like spans Tyr8–Val59. Fe cation is bound by residues Cys13, Cys16, Cys46, and Cys49.

It belongs to the rubredoxin family. Fe(3+) serves as cofactor.

Functionally, involved in the hydrocarbon hydroxylating system, which transfers electrons from NADH to rubredoxin reductase and then through rubredoxin to alkane 1 monooxygenase. This Rhodococcus erythropolis (Arthrobacter picolinophilus) protein is Rubredoxin-2 (rubA2).